The following is a 159-amino-acid chain: Probable cyclic pyranopterin monophosphate synthase (159 aa).

Substrate is bound by residues 74-76 (MCH) and 110-111 (ME). Asp125 is an active-site residue.

It belongs to the MoaC family. Homohexamer; trimer of dimers.

It catalyses the reaction (8S)-3',8-cyclo-7,8-dihydroguanosine 5'-triphosphate = cyclic pyranopterin phosphate + diphosphate. Its pathway is cofactor biosynthesis; molybdopterin biosynthesis. Its function is as follows. Catalyzes the conversion of (8S)-3',8-cyclo-7,8-dihydroguanosine 5'-triphosphate to cyclic pyranopterin monophosphate (cPMP). This Methanococcoides burtonii (strain DSM 6242 / NBRC 107633 / OCM 468 / ACE-M) protein is Probable cyclic pyranopterin monophosphate synthase.